A 182-amino-acid chain; its full sequence is Large ribosomal subunit protein uL15 (182 aa).

Positions 1 to 52 are disordered; the sequence is MDLSSLRPAKGAVKNKKRIGRGPGSGNGTTAGKGNKGQQSRSGYTRPVSEGG. The segment covering 21–35 has biased composition (gly residues); sequence RGPGSGNGTTAGKGN.

The protein belongs to the universal ribosomal protein uL15 family. As to quaternary structure, part of the 50S ribosomal subunit.

Functionally, binds to the 23S rRNA. This is Large ribosomal subunit protein uL15 from Chlorobium phaeobacteroides (strain BS1).